Reading from the N-terminus, the 638-residue chain is SUMO-activating enzyme subunit 2 (638 aa).

Residues 24–29 (GAGGIG), Asp48, 56–59 (NLNR), Lys72, 95–96 (SI), and 117–122 (DNRAAR) each bind ATP. Cys158 and Cys161 together coordinate Zn(2+). Residue Lys164 forms a Glycyl lysine isopeptide (Lys-Gly) (interchain with G-Cter in SUMO1) linkage. Cys173 serves as the catalytic Glycyl thioester intermediate. Residue Lys190 forms a Glycyl lysine isopeptide (Lys-Gly) (interchain with G-Cter in SUMO) linkage. The disordered stretch occupies residues 202–233 (ADQEVSPDRADPEAAWEPTEAEARARASNEDG). Phosphoserine is present on Ser207. Residues 222-233 (AEARARASNEDG) are compositionally biased toward basic and acidic residues. Lys236 is covalently cross-linked (Glycyl lysine isopeptide (Lys-Gly) (interchain with G-Cter in SUMO1); alternate). Glycyl lysine isopeptide (Lys-Gly) (interchain with G-Cter in SUMO2); alternate cross-links involve residues Lys236 and Lys257. Glycyl lysine isopeptide (Lys-Gly) (interchain with G-Cter in SUMO); alternate cross-links involve residues Lys257 and Lys271. Lys271 is modified (N6-acetyllysine; alternate). Lys275 participates in a covalent cross-link: Glycyl lysine isopeptide (Lys-Gly) (interchain with G-Cter in SUMO). Lys369 participates in a covalent cross-link: Glycyl lysine isopeptide (Lys-Gly) (interchain with G-Cter in SUMO2). A Glycyl lysine isopeptide (Lys-Gly) (interchain with G-Cter in SUMO1); alternate cross-link involves residue Lys418. Lys418 is covalently cross-linked (Glycyl lysine isopeptide (Lys-Gly) (interchain with G-Cter in SUMO2); alternate). Positions 439 and 442 each coordinate Zn(2+). A Phosphoserine modification is found at Ser505. Lys538 participates in a covalent cross-link: Glycyl lysine isopeptide (Lys-Gly) (interchain with G-Cter in SUMO2). Ser548 and Ser590 each carry phosphoserine. Over residues 548-561 (SPEKVGPKQAEDAA) the composition is skewed to basic and acidic residues. Residues 548–638 (SPEKVGPKQA…EDPDDVIALD (91 aa)) form a disordered region. Residues 581–594 (EQDDVLIVDSDEEG) show a composition bias toward acidic residues. Residues 603–614 (GDDKARKRKLEE) are compositionally biased toward basic and acidic residues. Residue Lys609 forms a Glycyl lysine isopeptide (Lys-Gly) (interchain with G-Cter in SUMO) linkage. Lys611 participates in a covalent cross-link: Glycyl lysine isopeptide (Lys-Gly) (interchain with G-Cter in SUMO); alternate. Lys611 is subject to N6-acetyllysine; alternate. Lys621 participates in a covalent cross-link: Glycyl lysine isopeptide (Lys-Gly) (interchain with G-Cter in SUMO). Over residues 628–638 (MEDPDDVIALD) the composition is skewed to acidic residues.

Belongs to the ubiquitin-activating E1 family. In terms of assembly, heterodimer of SAE1 and UBA2/SAE2. The heterodimer corresponds to the two domains that are encoded on a single polypeptide chain in ubiquitin-activating enzyme E1. Interacts with UBE2I. In terms of processing, sumoylated with SUMO1 and SUMO2/3 and by UBC9. Sumoylation at Lys-236 inhibits enzymatic activity. Sumoylation at the C-terminal lysine cluster plays an essential role in nuclear trafficking. Broadly expressed, with highest levels in testis.

Its subcellular location is the cytoplasm. The protein localises to the nucleus. It participates in protein modification; protein sumoylation. The heterodimer acts as an E1 ligase for SUMO1, SUMO2, SUMO3, and probably SUMO4. It mediates ATP-dependent activation of SUMO proteins followed by formation of a thioester bond between a SUMO protein and a conserved active site cysteine residue on UBA2/SAE2. This Mus musculus (Mouse) protein is SUMO-activating enzyme subunit 2 (Uba2).